A 432-amino-acid polypeptide reads, in one-letter code: Glutamate-1-semialdehyde 2,1-aminomutase (432 aa).

N6-(pyridoxal phosphate)lysine is present on lysine 265.

It belongs to the class-III pyridoxal-phosphate-dependent aminotransferase family. HemL subfamily. In terms of assembly, homodimer. It depends on pyridoxal 5'-phosphate as a cofactor.

It localises to the cytoplasm. It catalyses the reaction (S)-4-amino-5-oxopentanoate = 5-aminolevulinate. It functions in the pathway porphyrin-containing compound metabolism; protoporphyrin-IX biosynthesis; 5-aminolevulinate from L-glutamyl-tRNA(Glu): step 2/2. This Histophilus somni (strain 129Pt) (Haemophilus somnus) protein is Glutamate-1-semialdehyde 2,1-aminomutase.